We begin with the raw amino-acid sequence, 390 residues long: Anhydro-N-acetylmuramic acid kinase (390 aa).

9–16 contacts ATP; sequence GTSLDGID.

This sequence belongs to the anhydro-N-acetylmuramic acid kinase family.

It carries out the reaction 1,6-anhydro-N-acetyl-beta-muramate + ATP + H2O = N-acetyl-D-muramate 6-phosphate + ADP + H(+). Its pathway is amino-sugar metabolism; 1,6-anhydro-N-acetylmuramate degradation. The protein operates within cell wall biogenesis; peptidoglycan recycling. Functionally, catalyzes the specific phosphorylation of 1,6-anhydro-N-acetylmuramic acid (anhMurNAc) with the simultaneous cleavage of the 1,6-anhydro ring, generating MurNAc-6-P. Is required for the utilization of anhMurNAc either imported from the medium or derived from its own cell wall murein, and thus plays a role in cell wall recycling. The chain is Anhydro-N-acetylmuramic acid kinase from Bacillus cereus (strain ATCC 14579 / DSM 31 / CCUG 7414 / JCM 2152 / NBRC 15305 / NCIMB 9373 / NCTC 2599 / NRRL B-3711).